We begin with the raw amino-acid sequence, 60 residues long: Small ribosomal subunit protein bS21 (60 aa).

A disordered region spans residues 38–60 (KGVKRREKEKAARKRLQKKHRMY).

Belongs to the bacterial ribosomal protein bS21 family.

This Mycoplasmoides gallisepticum (strain R(low / passage 15 / clone 2)) (Mycoplasma gallisepticum) protein is Small ribosomal subunit protein bS21.